Consider the following 132-residue polypeptide: UPF0299 membrane protein YohJ (132 aa).

4 helical membrane passes run 7–27 (IIWQ…AGIF), 31–51 (LLPI…VLLA), 63–83 (GCYV…VGVM), and 93–113 (FGPV…VVSW).

Belongs to the UPF0299 family.

It is found in the cell inner membrane. The polypeptide is UPF0299 membrane protein YohJ (Salmonella arizonae (strain ATCC BAA-731 / CDC346-86 / RSK2980)).